The primary structure comprises 463 residues: tRNA (guanine(37)-N(1))-methyltransferase (463 aa).

Residues histidine 207, 245 to 246, 274 to 275, and asparagine 305 each bind S-adenosyl-L-methionine; these read DL and DG.

Belongs to the class I-like SAM-binding methyltransferase superfamily. TRM5/TYW2 family. As to quaternary structure, monomer.

Its subcellular location is the mitochondrion matrix. It is found in the nucleus. The protein resides in the cytoplasm. It carries out the reaction guanosine(37) in tRNA + S-adenosyl-L-methionine = N(1)-methylguanosine(37) in tRNA + S-adenosyl-L-homocysteine + H(+). In terms of biological role, specifically methylates the N1 position of guanosine-37 in various cytoplasmic and mitochondrial tRNAs. Methylation is not dependent on the nature of the nucleoside 5' of the target nucleoside. This is the first step in the biosynthesis of wybutosine (yW), a modified base adjacent to the anticodon of tRNAs and required for accurate decoding. The sequence is that of tRNA (guanine(37)-N(1))-methyltransferase from Pediculus humanus subsp. corporis (Body louse).